The primary structure comprises 811 residues: U-box domain-containing protein 43 (811 aa).

The U-box domain maps to 24-103; the sequence is NIYEAFICPL…EEWRARNDAL (80 aa). ARM repeat units lie at residues 136-175, 178-217, 220-261, 263-302, 303-342, 344-388, 399-438, 444-484, and 489-528; these read RKIR…VVVE, EESK…ELSK, ALCE…NLER, EENV…VLAL, NNDV…NISS, EGSA…NIVN, GPHH…GLTS, INVV…NISP, and ELAN…LLAE.

The catalysed reaction is S-ubiquitinyl-[E2 ubiquitin-conjugating enzyme]-L-cysteine + [acceptor protein]-L-lysine = [E2 ubiquitin-conjugating enzyme]-L-cysteine + N(6)-ubiquitinyl-[acceptor protein]-L-lysine.. It participates in protein modification; protein ubiquitination. In terms of biological role, functions as an E3 ubiquitin ligase. This Arabidopsis thaliana (Mouse-ear cress) protein is U-box domain-containing protein 43 (PUB43).